A 249-amino-acid polypeptide reads, in one-letter code: Probable transcriptional regulatory protein OTBS_0251 (249 aa).

It belongs to the TACO1 family.

It is found in the cytoplasm. The polypeptide is Probable transcriptional regulatory protein OTBS_0251 (Orientia tsutsugamushi (strain Boryong) (Rickettsia tsutsugamushi)).